A 676-amino-acid chain; its full sequence is Protein timeless (676 aa).

Residues 77–108 are necessary for normal circadian rhythm; that stretch reads VNTLQKLLNLWFEASLSESSEDNESNTSPPKK. Disordered stretches follow at residues 94–145 and 346–398; these read ESSE…CDER and PESI…LVKR. Composition is skewed to low complexity over residues 101-129 and 360-369; these read SNTS…SDNG and QGKPQHQKPP. Residues 388-398 carry the Nuclear localization signal motif; that stretch reads KELRRKKLVKR.

The protein belongs to the timeless family. As to quaternary structure, forms a heterodimer with period (PER); the complex then translocates into the nucleus. Phosphorylated with a circadian rhythmicity.

The protein localises to the nucleus. It is found in the cytoplasm. Its subcellular location is the perinuclear region. Functionally, required for the production of circadian rhythms. The biological cycle depends on the rhythmic formation and nuclear localization of the TIM-PER complex. Light induces the degradation of TIM, which promotes elimination of PER. Nuclear activity of the heterodimer coordinatively regulates PER and TIM transcription through a negative feedback loop. Behaves as a negative element in circadian transcriptional loop. Does not appear to bind DNA, suggesting indirect transcriptional inhibition. The chain is Protein timeless (tim) from Drosophila hydei (Fruit fly).